The following is a 170-amino-acid chain: Small ribosomal subunit protein bS16 (170 aa).

Positions 109–170 (ALAEAEGGPS…AAESEAPAAE (62 aa)) are disordered. Positions 131–150 (AKKDEQPTEKAAEPAAEKAA) are enriched in basic and acidic residues. Low complexity predominate over residues 151-170 (EPAAEAPAEAAAESEAPAAE).

Belongs to the bacterial ribosomal protein bS16 family.

This chain is Small ribosomal subunit protein bS16, found in Mycolicibacterium gilvum (strain PYR-GCK) (Mycobacterium gilvum (strain PYR-GCK)).